A 537-amino-acid chain; its full sequence is Chaperonin GroEL 2 (537 aa).

Residues 29–32 (TLGP), 86–90 (DGTTT), glycine 413, 477–479 (NAA), and aspartate 493 contribute to the ATP site.

This sequence belongs to the chaperonin (HSP60) family. In terms of assembly, forms a cylinder of 14 subunits composed of two heptameric rings stacked back-to-back. Interacts with the co-chaperonin GroES.

Its subcellular location is the cytoplasm. The enzyme catalyses ATP + H2O + a folded polypeptide = ADP + phosphate + an unfolded polypeptide.. Its function is as follows. Together with its co-chaperonin GroES, plays an essential role in assisting protein folding. The GroEL-GroES system forms a nano-cage that allows encapsulation of the non-native substrate proteins and provides a physical environment optimized to promote and accelerate protein folding. This chain is Chaperonin GroEL 2, found in Rhodococcus jostii (strain RHA1).